Consider the following 217-residue polypeptide: MOB kinase activator 3A (217 aa).

Zn(2+)-binding residues include Cys83, Cys88, His165, and His170.

It belongs to the MOB1/phocein family.

Its function is as follows. May regulate the activity of kinases. In Mus musculus (Mouse), this protein is MOB kinase activator 3A (Mob3a).